A 477-amino-acid polypeptide reads, in one-letter code: Bifunctional protein HldE (477 aa).

Residues 1–318 (MKVTLPEFER…ENAVRGRADT (318 aa)) are ribokinase. Residue K179 is modified to N6-acetyllysine. 195-198 (NLSE) contributes to the ATP binding site. D264 is a catalytic residue. The cytidylyltransferase stretch occupies residues 344–477 (MTNGVFDILH…IKKIQQDKKG (134 aa)).

In the N-terminal section; belongs to the carbohydrate kinase PfkB family. The protein in the C-terminal section; belongs to the cytidylyltransferase family. Homodimer.

The enzyme catalyses D-glycero-beta-D-manno-heptose 7-phosphate + ATP = D-glycero-beta-D-manno-heptose 1,7-bisphosphate + ADP + H(+). The catalysed reaction is D-glycero-beta-D-manno-heptose 1-phosphate + ATP + H(+) = ADP-D-glycero-beta-D-manno-heptose + diphosphate. It functions in the pathway nucleotide-sugar biosynthesis; ADP-L-glycero-beta-D-manno-heptose biosynthesis; ADP-L-glycero-beta-D-manno-heptose from D-glycero-beta-D-manno-heptose 7-phosphate: step 1/4. It participates in nucleotide-sugar biosynthesis; ADP-L-glycero-beta-D-manno-heptose biosynthesis; ADP-L-glycero-beta-D-manno-heptose from D-glycero-beta-D-manno-heptose 7-phosphate: step 3/4. Its pathway is bacterial outer membrane biogenesis; LPS core biosynthesis. In terms of biological role, catalyzes the phosphorylation of D-glycero-D-manno-heptose 7-phosphate at the C-1 position to selectively form D-glycero-beta-D-manno-heptose-1,7-bisphosphate. Catalyzes the ADP transfer from ATP to D-glycero-beta-D-manno-heptose 1-phosphate, yielding ADP-D-glycero-beta-D-manno-heptose. The polypeptide is Bifunctional protein HldE (Shigella flexneri).